A 4760-amino-acid chain; its full sequence is Nonribosomal peptide synthetase cm3A (4760 aa).

Over residues 1–12 (MKHLASSENMPT) the composition is skewed to polar residues. The interval 1–24 (MKHLASSENMPTPAQDRAPSPSAM) is disordered. A Carrier 1 domain is found at 19 to 95 (PSPSAMQQEI…ELSRSAECQL (77 aa)). At S56 the chain carries O-(pantetheine 4'-phosphoryl)serine. 2 condensation regions span residues 142 to 570 (QDIF…EIEQ) and 178 to 571 (PGLS…IEQL). Residues 591–984 (DEQARLCPDA…GRRDTQVKLR (394 aa)) form an adenylation 1 region. In terms of domain architecture, Carrier 2 spans 1120–1197 (REATTLQLQI…KLTEKLGVPE (78 aa)). Position 1158 is an O-(pantetheine 4'-phosphoryl)serine (S1158). Condensation regions lie at residues 1210–1654 (FPLS…KTPS) and 1689–2125 (VEDM…NVTT). The adenylation 2 stretch occupies residues 2171-2551 (DGDLTYFELD…DRKDWQIKIR (381 aa)). The 79-residue stretch at 2684-2762 (LPSSETEKTV…ELAHAIDQRS (79 aa)) folds into the Carrier 3 domain. S2721 carries the O-(pantetheine 4'-phosphoryl)serine modification. The tract at residues 2811–3203 (VEDIYPCTPL…RFKHIFGQLS (393 aa)) is condensation 4. The interval 3255–3647 (SATTPDRPAV…GRADQQLKIR (393 aa)) is adenylation 3. The Carrier 4 domain occupies 3783–3857 (TRTEELMQSV…QLAQRATTDA (75 aa)). Condensation stretches follow at residues 3869–4296 (EFRL…TLLC) and 4340–4757 (EDIY…EEMG).

Belongs to the nrps family.

It participates in secondary metabolite biosynthesis. In terms of biological role, nonribosomal peptide synthetase; part of the gene cluster that mediates the biosynthesis of beauveriolides I and III, cyclodepsipeptides acting as inhibitors of the acyl-CoA:cholesterol acyltransferase. The HR-PKS cm3B initiates the biosynthesis of beauveriolides by iteratively catalyzing the formation of the linear polyketide chain. The ATP-dependent acetyl-CoA ligase cm3D converts the polyketide carboxylic acid to a CoA thioester which id shuttled to the first T domain in the NRPS cm3A by the acetyltransferase cm3C. Cm3A contains 13 domains and assembles the polyketide chain, L-phenylalanine, L-alanine, and D-leucine (or D-allo-isoleucine) to form beauveriolide I (or beauveriolide III). The production of both beauveriolides I and III suggests the substrate adaptability of cm3B, using different amino acids as substrates. This is Nonribosomal peptide synthetase cm3A from Cordyceps militaris (strain CM01) (Caterpillar fungus).